Here is a 501-residue protein sequence, read N- to C-terminus: MAMRGFTLFSILVLSLCASSIRSEETETKEFVLTLDHTNFTDTINKHDFIVVEFYAPWCGHCKQLAPEYEKAASALSSNVPPVVLAKIDASEETNREFATQYEVQGFPTIKIFRNGGKAVQEYNGPREAEGIVTYLKKQSGPASAEIKSADDASEVVSDKKVVVVGIFPKLSGSEFDSFMAIAEKLRSELDFAHTSDAKLLPRGESSVTGPVVRLFKPFDEQFVDSKDFDGEALEKFVKESSIPLITVFDKDPNNHPYVIKFFESTNTKAMLFINFTGEGAESLKSKYREVATSNKGQGLSFLLGDAENSQGAFQYFGLEESQVPLIIIQTADDKKYLKTNVEVDQIESWVKDFKDGKIAPHKKSQPIPAENNEPVKVVVSDSLDDIVLNSGKNVLLEFYAPWCGHCQKLAPILDEVAVSYQSDSSVVIAKLDATANDFPKDTFDVKGFPTIYFKSASGNVVVYEGDRTKEDFISFVDKNKDTVGEPKKEEETTEEVKDEL.

The first 23 residues, 1–23 (MAMRGFTLFSILVLSLCASSIRS), serve as a signal peptide directing secretion. Residues 24-141 (EETETKEFVL…IVTYLKKQSG (118 aa)) enclose the Thioredoxin 1 domain. Residue Asn39 is glycosylated (N-linked (GlcNAc...) asparagine). Catalysis depends on nucleophile residues Cys59 and Cys62. The cysteines at positions 59 and 62 are disulfide-linked. Asn275 carries an N-linked (GlcNAc...) asparagine glycan. Positions 354-482 (FKDGKIAPHK…FISFVDKNKD (129 aa)) constitute a Thioredoxin 2 domain. Catalysis depends on nucleophile residues Cys404 and Cys407. Cys404 and Cys407 form a disulfide bridge. The Prevents secretion from ER motif lies at 498 to 501 (KDEL).

The protein belongs to the protein disulfide isomerase family. In terms of assembly, interacts with RD21A, At3g19390, At5g43060. In terms of tissue distribution, highly expressed in flowers, stems and immature seeds, and at lower levels in leaves and siliques (at protein level).

It localises to the endoplasmic reticulum lumen. The protein localises to the vacuole. It carries out the reaction Catalyzes the rearrangement of -S-S- bonds in proteins.. In terms of biological role, protein disulfide isomerase that associates with RD21A protease for trafficking from the ER through the Golgi to lytic and protein storage vacuoles of endothelial cells in developing seeds. Regulates the timing of programmed cell death (PCD) of the endothelial cells by chaperoning and inhibiting cysteine proteases during their trafficking to vacuoles. In Arabidopsis thaliana (Mouse-ear cress), this protein is Protein disulfide isomerase-like 1-1 (PDIL1-1).